The following is a 147-amino-acid chain: Large ribosomal subunit protein uL15 (147 aa).

Residues 1-59 (MKLYELKPAPGSKKNRKRVGRGESSGHGKTSTRGHKGQWARSGGGVRPGFEGGQMPLTR) are disordered. Positions 42-52 (SGGGVRPGFEG) are enriched in gly residues.

The protein belongs to the universal ribosomal protein uL15 family. As to quaternary structure, part of the 50S ribosomal subunit.

Functionally, binds to the 23S rRNA. This Caldicellulosiruptor bescii (strain ATCC BAA-1888 / DSM 6725 / KCTC 15123 / Z-1320) (Anaerocellum thermophilum) protein is Large ribosomal subunit protein uL15.